The chain runs to 134 residues: Holo-[acyl-carrier-protein] synthase (134 aa).

Positions 8 and 57 each coordinate Mg(2+).

It belongs to the P-Pant transferase superfamily. AcpS family. Mg(2+) serves as cofactor.

Its subcellular location is the cytoplasm. The catalysed reaction is apo-[ACP] + CoA = holo-[ACP] + adenosine 3',5'-bisphosphate + H(+). Functionally, transfers the 4'-phosphopantetheine moiety from coenzyme A to a Ser of acyl-carrier-protein. This is Holo-[acyl-carrier-protein] synthase from Rhizobium etli (strain ATCC 51251 / DSM 11541 / JCM 21823 / NBRC 15573 / CFN 42).